A 368-amino-acid polypeptide reads, in one-letter code: Protein NDRG2 (368 aa).

A compositionally biased stretch (low complexity) spans serine 330–glycine 339. The segment at serine 330–cysteine 368 is disordered.

This sequence belongs to the NDRG family.

Its subcellular location is the cytoplasm. Its function is as follows. Contributes to the regulation of the Wnt signaling pathway. Down-regulates CTNNB1-mediated transcriptional activation of target genes. May be involved in neuron differentiation. The chain is Protein NDRG2 (ndrg2) from Danio rerio (Zebrafish).